The primary structure comprises 704 residues: DNA ligase (704 aa).

Residues Asp-43–Asp-47, Ser-92–Leu-93, and Glu-124 each bind NAD(+). The active-site N6-AMP-lysine intermediate is the Lys-126. NAD(+) contacts are provided by Arg-147, Glu-182, Lys-298, and Lys-322. 4 residues coordinate Zn(2+): Cys-427, Cys-430, Cys-445, and Cys-451. Residues Pro-625–Ala-704 form the BRCT domain.

It belongs to the NAD-dependent DNA ligase family. LigA subfamily. The cofactor is Mg(2+). Requires Mn(2+) as cofactor.

It catalyses the reaction NAD(+) + (deoxyribonucleotide)n-3'-hydroxyl + 5'-phospho-(deoxyribonucleotide)m = (deoxyribonucleotide)n+m + AMP + beta-nicotinamide D-nucleotide.. Its function is as follows. DNA ligase that catalyzes the formation of phosphodiester linkages between 5'-phosphoryl and 3'-hydroxyl groups in double-stranded DNA using NAD as a coenzyme and as the energy source for the reaction. It is essential for DNA replication and repair of damaged DNA. This Cereibacter sphaeroides (strain ATCC 17023 / DSM 158 / JCM 6121 / CCUG 31486 / LMG 2827 / NBRC 12203 / NCIMB 8253 / ATH 2.4.1.) (Rhodobacter sphaeroides) protein is DNA ligase.